Here is an 86-residue protein sequence, read N- to C-terminus: Acyl carrier protein (86 aa).

The region spanning 2-82 (ATVFERVKKV…AVVDYLKSKG (81 aa)) is the Carrier domain. Ser-37 carries the O-(pantetheine 4'-phosphoryl)serine modification.

Belongs to the acyl carrier protein (ACP) family. 4'-phosphopantetheine is transferred from CoA to a specific serine of apo-ACP by AcpS. This modification is essential for activity because fatty acids are bound in thioester linkage to the sulfhydryl of the prosthetic group.

Its subcellular location is the cytoplasm. It participates in lipid metabolism; fatty acid biosynthesis. Its function is as follows. Carrier of the growing fatty acid chain in fatty acid biosynthesis. This is Acyl carrier protein from Dehalococcoides mccartyi (strain ATCC BAA-2266 / KCTC 15142 / 195) (Dehalococcoides ethenogenes (strain 195)).